The primary structure comprises 77 residues: Conotoxin Vc6.14 (77 aa).

The N-terminal stretch at 1 to 19 is a signal peptide; it reads MEKLTILLLVAAVLMSTQA. A propeptide spanning residues 20-37 is cleaved from the precursor; it reads MFQGGGEKRPKDKIKFLS. 3 disulfide bridges follow: C51–C65, C58–C69, and C64–C74.

It belongs to the conotoxin O2 superfamily. Expressed by the venom duct.

The protein resides in the secreted. Functionally, inhibits voltage-gated ion channels. The sequence is that of Conotoxin Vc6.14 from Conus victoriae (Queen Victoria cone).